The chain runs to 278 residues: Thiazole synthase (278 aa).

The active-site Schiff-base intermediate with DXP is the K107. 1-deoxy-D-xylulose 5-phosphate contacts are provided by residues G168, 194 to 195 (AG), and 216 to 217 (AS).

It belongs to the ThiG family. In terms of assembly, homotetramer. Forms heterodimers with either ThiH or ThiS.

Its subcellular location is the cytoplasm. The catalysed reaction is [ThiS sulfur-carrier protein]-C-terminal-Gly-aminoethanethioate + 2-iminoacetate + 1-deoxy-D-xylulose 5-phosphate = [ThiS sulfur-carrier protein]-C-terminal Gly-Gly + 2-[(2R,5Z)-2-carboxy-4-methylthiazol-5(2H)-ylidene]ethyl phosphate + 2 H2O + H(+). Its pathway is cofactor biosynthesis; thiamine diphosphate biosynthesis. Its function is as follows. Catalyzes the rearrangement of 1-deoxy-D-xylulose 5-phosphate (DXP) to produce the thiazole phosphate moiety of thiamine. Sulfur is provided by the thiocarboxylate moiety of the carrier protein ThiS. In vitro, sulfur can be provided by H(2)S. The sequence is that of Thiazole synthase from Corynebacterium jeikeium (strain K411).